A 263-amino-acid chain; its full sequence is uncharacterized protein (263 aa).

Residue 13-20 (TGSTSGIG) coordinates NADP(+). Ser-141 contacts substrate. The Proton acceptor role is filled by Tyr-154.

Belongs to the short-chain dehydrogenases/reductases (SDR) family.

This is an uncharacterized protein from Bacillus subtilis (strain 168).